The sequence spans 423 residues: Amino acid transporter AVT1J (423 aa).

11 helical membrane-spanning segments follow: residues 39–59 (CFHGINALSGVGILSVPYALA), 63–83 (WLSLIILFTVAITTFYCAILI), 110–130 (VIVSIFMNLELYLVATSFLIL), 151–171 (FQGKQMFIIMVALIILPSVWL), 186–206 (FASGVILASIFSVGAFEGVGF), 219–239 (VATSVSLYAFCYCAHPVFPTL), 252–272 (VMIICFTICTFIYASVAVLGY), 297–317 (AIWTTLVNPIAKFALMVTPII), 333–355 (ASGFLLSTILVTSNVIVALLLPF), 359–381 (LMSLVGAFLSASASVILPCLCYL), and 390–410 (LGFETLVLIGITLTGIVVVIT).

This sequence belongs to the amino acid/polyamine transporter 2 family. Amino acid/auxin permease (AAAP) (TC 2.A.18.5) subfamily.

Its subcellular location is the membrane. The sequence is that of Amino acid transporter AVT1J from Arabidopsis thaliana (Mouse-ear cress).